A 426-amino-acid chain; its full sequence is Serine hydroxymethyltransferase (426 aa).

Residues Leu-113 and 117-119 (GHL) each bind (6S)-5,6,7,8-tetrahydrofolate. N6-(pyridoxal phosphate)lysine is present on Lys-222. 363–365 (SAF) is a (6S)-5,6,7,8-tetrahydrofolate binding site.

This sequence belongs to the SHMT family. As to quaternary structure, homodimer. The cofactor is pyridoxal 5'-phosphate.

It is found in the cytoplasm. The catalysed reaction is (6R)-5,10-methylene-5,6,7,8-tetrahydrofolate + glycine + H2O = (6S)-5,6,7,8-tetrahydrofolate + L-serine. Its pathway is one-carbon metabolism; tetrahydrofolate interconversion. It participates in amino-acid biosynthesis; glycine biosynthesis; glycine from L-serine: step 1/1. In terms of biological role, catalyzes the reversible interconversion of serine and glycine with tetrahydrofolate (THF) serving as the one-carbon carrier. This reaction serves as the major source of one-carbon groups required for the biosynthesis of purines, thymidylate, methionine, and other important biomolecules. Also exhibits THF-independent aldolase activity toward beta-hydroxyamino acids, producing glycine and aldehydes, via a retro-aldol mechanism. In Phocaeicola vulgatus (strain ATCC 8482 / DSM 1447 / JCM 5826 / CCUG 4940 / NBRC 14291 / NCTC 11154) (Bacteroides vulgatus), this protein is Serine hydroxymethyltransferase.